Consider the following 88-residue polypeptide: NADH-ubiquinone oxidoreductase chain 4L (88 aa).

3 consecutive transmembrane segments (helical) span residues 1 to 21 (MNLS…NRKN), 22 to 42 (IILM…LVLM), and 55 to 75 (FSIY…SILV).

Belongs to the complex I subunit 4L family.

Its subcellular location is the mitochondrion membrane. The enzyme catalyses a ubiquinone + NADH + 5 H(+)(in) = a ubiquinol + NAD(+) + 4 H(+)(out). Its function is as follows. Core subunit of the mitochondrial membrane respiratory chain NADH dehydrogenase (Complex I) that is believed to belong to the minimal assembly required for catalysis. Complex I functions in the transfer of electrons from NADH to the respiratory chain. The immediate electron acceptor for the enzyme is believed to be ubiquinone. This is NADH-ubiquinone oxidoreductase chain 4L (ND4L) from Schizophyllum commune (Split gill fungus).